A 271-amino-acid chain; its full sequence is Putative phosphoenolpyruvate synthase regulatory protein (271 aa).

151 to 158 contacts ADP; sequence GVSRSGKT.

This sequence belongs to the pyruvate, phosphate/water dikinase regulatory protein family. PSRP subfamily.

The enzyme catalyses [pyruvate, water dikinase] + ADP = [pyruvate, water dikinase]-phosphate + AMP + H(+). It catalyses the reaction [pyruvate, water dikinase]-phosphate + phosphate + H(+) = [pyruvate, water dikinase] + diphosphate. Bifunctional serine/threonine kinase and phosphorylase involved in the regulation of the phosphoenolpyruvate synthase (PEPS) by catalyzing its phosphorylation/dephosphorylation. This Paraburkholderia xenovorans (strain LB400) protein is Putative phosphoenolpyruvate synthase regulatory protein.